The chain runs to 183 residues: Capsid protein (183 aa).

A disordered region spans residues 143–183; the sequence is LPETTVVRRRGRSPRRRTPSPRRRRSKSPRRRRSQSRESQC. A compositionally biased stretch (basic residues) spans 149-176; that stretch reads VRRRGRSPRRRTPSPRRRRSKSPRRRRS. Residues Ser-155, Ser-162, and Ser-170 each carry the phosphoserine; by host modification. The stretch at 155 to 160 is one 1; half-length repeat; sequence SPRRRT. The segment at 155–176 is 3 X 7 AA repeats of S-P-R-R-R-[PR]-S; that stretch reads SPRRRTPSPRRRRSKSPRRRRS. The Bipartite nuclear localization signal signature appears at 158–175; sequence RRTPSPRRRRSKSPRRRR. Repeat copies occupy residues 162-168 and 170-176. Positions 177 to 183 are RNA binding; that stretch reads QSRESQC.

This sequence belongs to the orthohepadnavirus core antigen family. Homodimerizes, then multimerizes. Interacts with cytosol exposed regions of viral L glycoprotein present in the reticulum-to-Golgi compartment. Interacts with human FLNB. Phosphorylated form interacts with host importin alpha; this interaction depends on the exposure of the NLS, which itself depends upon genome maturation and/or phosphorylation of the capsid protein. Interacts with host NUP153. Phosphorylated by host SRPK1, SRPK2, and maybe protein kinase C or GAPDH. Phosphorylation is critical for pregenomic RNA packaging. Protein kinase C phosphorylation is stimulated by HBx protein and may play a role in transport of the viral genome to the nucleus at the late step during the viral replication cycle.

It localises to the virion. The protein resides in the host cytoplasm. Self assembles to form an icosahedral capsid. Most capsids appear to be large particles with an icosahedral symmetry of T=4 and consist of 240 copies of capsid protein, though a fraction forms smaller T=3 particles consisting of 180 capsid proteins. Entering capsids are transported along microtubules to the nucleus. Phosphorylation of the capsid is thought to induce exposure of nuclear localization signal in the C-terminal portion of the capsid protein that allows binding to the nuclear pore complex via the importin (karyopherin-) alpha and beta. Capsids are imported in intact form through the nuclear pore into the nuclear basket, where it probably binds NUP153. Only capsids that contain the mature viral genome can release the viral DNA and capsid protein into the nucleoplasm. Immature capsids get stuck in the basket. Capsids encapsulate the pre-genomic RNA and the P protein. Pre-genomic RNA is reverse-transcribed into DNA while the capsid is still in the cytoplasm. The capsid can then either be directed to the nucleus, providing more genomes for transcription, or bud through the endoplasmic reticulum to provide new virions. In Homo sapiens (Human), this protein is Capsid protein.